The sequence spans 266 residues: Small ribosomal subunit protein uS3 (266 aa).

The KH type-2 domain maps to 39-107; it reads VREYLKKKLK…PVHVNIEEIR (69 aa). A disordered region spans residues 218–266; it reads EVAEDKRPRRNARPGDRRPRRDGEGGAPGARRGAPRRGAGKPEDGKTGE. Composition is skewed to basic and acidic residues over residues 230–241 and 257–266; these read RPGDRRPRRDGE and GKPEDGKTGE.

The protein belongs to the universal ribosomal protein uS3 family. In terms of assembly, part of the 30S ribosomal subunit. Forms a tight complex with proteins S10 and S14.

Functionally, binds the lower part of the 30S subunit head. Binds mRNA in the 70S ribosome, positioning it for translation. The protein is Small ribosomal subunit protein uS3 of Burkholderia ambifaria (strain MC40-6).